A 316-amino-acid polypeptide reads, in one-letter code: Serine protease 45 (316 aa).

An N-terminal signal peptide occupies residues 1 to 38 (MAASLSRLSAGLAASRPLGLSRSFLLLVLLLLNSGYKG). A Peptidase S1 domain is found at 49 to 290 (WWPKNLDLSR…YSRWIKKQIS (242 aa)). An intrachain disulfide couples Cys-74 to Cys-90. Residue His-89 is the Charge relay system of the active site. Asn-110 is a glycosylation site (N-linked (GlcNAc...) asparagine). The Charge relay system role is filled by Asp-137. Residues Asn-162 and Asn-186 are each glycosylated (N-linked (GlcNAc...) asparagine). 3 cysteine pairs are disulfide-bonded: Cys-171-Cys-248, Cys-206-Cys-229, and Cys-238-Cys-266. The active-site Charge relay system is Ser-242.

The protein belongs to the peptidase S1 family.

Its subcellular location is the secreted. The sequence is that of Serine protease 45 (PRSS45) from Bos taurus (Bovine).